We begin with the raw amino-acid sequence, 206 residues long: Small ribosomal subunit protein uS4 (206 aa).

Positions 96–156 (GRLDNVVYRM…EKSKKQARIK (61 aa)) constitute an S4 RNA-binding domain.

This sequence belongs to the universal ribosomal protein uS4 family. Part of the 30S ribosomal subunit. Contacts protein S5. The interaction surface between S4 and S5 is involved in control of translational fidelity.

Functionally, one of the primary rRNA binding proteins, it binds directly to 16S rRNA where it nucleates assembly of the body of the 30S subunit. With S5 and S12 plays an important role in translational accuracy. This chain is Small ribosomal subunit protein uS4, found in Histophilus somni (strain 2336) (Haemophilus somnus).